The chain runs to 615 residues: 1-deoxy-D-xylulose-5-phosphate synthase (615 aa).

Residues histidine 77 and 118-120 each bind thiamine diphosphate; that span reads GHS. Aspartate 149 is a Mg(2+) binding site. Residues 150–151, asparagine 178, tyrosine 286, and glutamate 367 contribute to the thiamine diphosphate site; that span reads GA. Asparagine 178 lines the Mg(2+) pocket.

This sequence belongs to the transketolase family. DXPS subfamily. As to quaternary structure, homodimer. Mg(2+) serves as cofactor. It depends on thiamine diphosphate as a cofactor.

The catalysed reaction is D-glyceraldehyde 3-phosphate + pyruvate + H(+) = 1-deoxy-D-xylulose 5-phosphate + CO2. It participates in metabolic intermediate biosynthesis; 1-deoxy-D-xylulose 5-phosphate biosynthesis; 1-deoxy-D-xylulose 5-phosphate from D-glyceraldehyde 3-phosphate and pyruvate: step 1/1. Catalyzes the acyloin condensation reaction between C atoms 2 and 3 of pyruvate and glyceraldehyde 3-phosphate to yield 1-deoxy-D-xylulose-5-phosphate (DXP). The protein is 1-deoxy-D-xylulose-5-phosphate synthase of Glaesserella parasuis serovar 5 (strain SH0165) (Haemophilus parasuis).